The primary structure comprises 616 residues: Dihydroxy-acid dehydratase (616 aa).

Asp81 is a Mg(2+) binding site. Residue Cys122 coordinates [2Fe-2S] cluster. Asp123 and Lys124 together coordinate Mg(2+). Lys124 carries the post-translational modification N6-carboxylysine. Cys195 lines the [2Fe-2S] cluster pocket. A Mg(2+)-binding site is contributed by Glu491. Ser517 (proton acceptor) is an active-site residue.

It belongs to the IlvD/Edd family. Homodimer. [2Fe-2S] cluster serves as cofactor. It depends on Mg(2+) as a cofactor.

It carries out the reaction (2R)-2,3-dihydroxy-3-methylbutanoate = 3-methyl-2-oxobutanoate + H2O. It catalyses the reaction (2R,3R)-2,3-dihydroxy-3-methylpentanoate = (S)-3-methyl-2-oxopentanoate + H2O. Its pathway is amino-acid biosynthesis; L-isoleucine biosynthesis; L-isoleucine from 2-oxobutanoate: step 3/4. It functions in the pathway amino-acid biosynthesis; L-valine biosynthesis; L-valine from pyruvate: step 3/4. In terms of biological role, functions in the biosynthesis of branched-chain amino acids. Catalyzes the dehydration of (2R,3R)-2,3-dihydroxy-3-methylpentanoate (2,3-dihydroxy-3-methylvalerate) into 2-oxo-3-methylpentanoate (2-oxo-3-methylvalerate) and of (2R)-2,3-dihydroxy-3-methylbutanoate (2,3-dihydroxyisovalerate) into 2-oxo-3-methylbutanoate (2-oxoisovalerate), the penultimate precursor to L-isoleucine and L-valine, respectively. In Salmonella paratyphi A (strain ATCC 9150 / SARB42), this protein is Dihydroxy-acid dehydratase.